A 345-amino-acid chain; its full sequence is Anthranilate phosphoribosyltransferase (345 aa).

5-phospho-alpha-D-ribose 1-diphosphate-binding positions include G79, 82–83 (GD), T87, 89–92 (NVST), 106–114 (KHGNRAVSG), and S118. G79 contributes to the anthranilate binding site. Mg(2+) is bound at residue S91. N109 contacts anthranilate. R164 contacts anthranilate. Mg(2+)-binding residues include D223 and E224.

Belongs to the anthranilate phosphoribosyltransferase family. In terms of assembly, homodimer. Mg(2+) is required as a cofactor.

The enzyme catalyses N-(5-phospho-beta-D-ribosyl)anthranilate + diphosphate = 5-phospho-alpha-D-ribose 1-diphosphate + anthranilate. It functions in the pathway amino-acid biosynthesis; L-tryptophan biosynthesis; L-tryptophan from chorismate: step 2/5. Catalyzes the transfer of the phosphoribosyl group of 5-phosphorylribose-1-pyrophosphate (PRPP) to anthranilate to yield N-(5'-phosphoribosyl)-anthranilate (PRA). This chain is Anthranilate phosphoribosyltransferase, found in Saccharolobus islandicus (strain L.S.2.15 / Lassen #1) (Sulfolobus islandicus).